The chain runs to 162 residues: UPF0254 protein MTH1148 homolog (162 aa).

It belongs to the UPF0254 family.

The protein is UPF0254 protein MTH1148 homolog of Methanothermobacter thermautotrophicus (strain Winter) (Methanobacterium thermoautotrophicum).